We begin with the raw amino-acid sequence, 110 residues long: Large ribosomal subunit protein uL22 (110 aa).

The protein belongs to the universal ribosomal protein uL22 family. Part of the 50S ribosomal subunit.

In terms of biological role, this protein binds specifically to 23S rRNA; its binding is stimulated by other ribosomal proteins, e.g. L4, L17, and L20. It is important during the early stages of 50S assembly. It makes multiple contacts with different domains of the 23S rRNA in the assembled 50S subunit and ribosome. The globular domain of the protein is located near the polypeptide exit tunnel on the outside of the subunit, while an extended beta-hairpin is found that lines the wall of the exit tunnel in the center of the 70S ribosome. The protein is Large ribosomal subunit protein uL22 of Leptospira interrogans serogroup Icterohaemorrhagiae serovar copenhageni (strain Fiocruz L1-130).